A 167-amino-acid chain; its full sequence is Endoribonuclease YbeY (167 aa).

The Zn(2+) site is built by H131, H135, and H141.

This sequence belongs to the endoribonuclease YbeY family. Zn(2+) is required as a cofactor.

The protein resides in the cytoplasm. In terms of biological role, single strand-specific metallo-endoribonuclease involved in late-stage 70S ribosome quality control and in maturation of the 3' terminus of the 16S rRNA. This is Endoribonuclease YbeY from Rickettsia rickettsii (strain Sheila Smith).